Here is a 126-residue protein sequence, read N- to C-terminus: Large ribosomal subunit protein bL19 (126 aa).

This sequence belongs to the bacterial ribosomal protein bL19 family.

In terms of biological role, this protein is located at the 30S-50S ribosomal subunit interface and may play a role in the structure and function of the aminoacyl-tRNA binding site. The protein is Large ribosomal subunit protein bL19 of Paracoccus denitrificans (strain Pd 1222).